The following is a 686-amino-acid chain: Putative pentatricopeptide repeat-containing protein At3g49142 (686 aa).

PPR repeat units lie at residues 73-103 (NSSL…IPER), 104-138 (NVII…NVRP), 139-173 (DHYT…GLSS), 174-204 (TLFV…MSRR), 205-239 (DVVS…KISH), 240-272 (DAGT…MGKK), 273-307 (SLVS…GFEP), 308-342 (DAVS…KLIP), 343-373 (NLLL…MKSR), 374-408 (DVVS…GLVP), 409-439 (DSIA…MTDH), and 445-475 (RLEH…MSME). A type E motif region spans residues 480–555 (VWGALLGACR…NPGASNVEVN (76 aa)). A type E(+) motif region spans residues 556-586 (RIIHTFLVGDRSHPQSDEIYRELDVLVKKMK). A type DYW motif region spans residues 587–686 (ELGYVPDSES…FGVCSCGDYW (100 aa)).

This sequence belongs to the PPR family. PCMP-H subfamily.

This is Putative pentatricopeptide repeat-containing protein At3g49142 (PCMP-H77) from Arabidopsis thaliana (Mouse-ear cress).